A 485-amino-acid chain; its full sequence is Sodium-coupled neutral amino acid symporter 1 (485 aa).

At 1–74 the chain is on the cytoplasmic side; it reads MMHFKSGLEL…EYIPGTTSLG (74 aa). Ser6 bears the Phosphoserine mark. Thr11 carries the post-translational modification Phosphothreonine. Phosphoserine occurs at positions 25, 28, 49, and 52. Phosphothreonine is present on Thr54. At Ser56 the chain carries Phosphoserine. A helical transmembrane segment spans residues 75-97; it reads MSVFNLSNAIMGSGILGLAFALA. Over 98-112 the chain is Extracellular; sequence NTGILLFLILLTSVT. Residues 113-133 form a helical membrane-spanning segment; it reads LLSIYSINLLLICSKETGCMV. Over 134–148 the chain is Cytoplasmic; the sequence is YEKLGEQVFGTTGKL. The helical transmembrane segment at 149 to 169 threads the bilayer; the sequence is VIFGATSLQNTGAMLSYLFIV. Residues 170 to 188 are Extracellular-facing; sequence KNELPSAIKSLMGEEDAFS. The chain crosses the membrane as a helical span at residues 189–211; that stretch reads AWYVDGRVLVVMVTFGIILPLCL. Over 212 to 216 the chain is Cytoplasmic; sequence LKNLG. Residues 217 to 237 form a helical membrane-spanning segment; sequence YLGYTSGFSLSCMMFFLIVVI. Topologically, residues 238–273 are extracellular; it reads YKKFQTPCMSVEQNSTVSANVTDACTPKYVTFNSKT. A disulfide bond links Cys245 and Cys262. Asn251 and Asn257 each carry an N-linked (GlcNAc...) asparagine glycan. A helical membrane pass occupies residues 274–294; the sequence is VYALPTIAFAFVCHPSVLPIY. The Cytoplasmic segment spans residues 295–310; it reads SELKDRSQKKMQMVSN. The chain crosses the membrane as a helical span at residues 311–331; sequence ISFFAMFVMYFLTAIFGYLTF. Topologically, residues 332 to 348 are extracellular; sequence YEKVQSDLLHKYQSTGD. Residues 349 to 369 form a helical membrane-spanning segment; the sequence is ILILTVRLAVIVAVILTVPVL. At 370–391 the chain is on the cytoplasmic side; that stretch reads FFTVRSSLFELAKKTKFHLCRH. A helical transmembrane segment spans residues 392-412; that stretch reads VLVTIILLIIINLLVIFIPSM. The Extracellular portion of the chain corresponds to 413-414; the sequence is KD. A helical transmembrane segment spans residues 415-435; it reads IFGVVGVTSANMLIFILPSSL. The Cytoplasmic portion of the chain corresponds to 436-450; it reads YLKITNQDGDKGTQR. Residues 451–471 form a helical membrane-spanning segment; it reads IWAALFLGLGVLFSLISIPLV. The Extracellular portion of the chain corresponds to 472 to 485; sequence IYDWACSSGTDEGH.

The protein belongs to the amino acid/polyamine transporter 2 family. Post-translationally, N-glycosylation plays an important role in the L-glutamine transport. As to expression, specifically expressed in brain and retina (at protein level). Also detected in spleen, small intestine and lung.

The protein resides in the cell membrane. It carries out the reaction L-glutamine(in) + Na(+)(in) = L-glutamine(out) + Na(+)(out). The enzyme catalyses L-alanine(in) + Na(+)(in) = L-alanine(out) + Na(+)(out). The catalysed reaction is L-histidine(in) + Na(+)(in) = L-histidine(out) + Na(+)(out). It catalyses the reaction L-asparagine(in) + Na(+)(in) = L-asparagine(out) + Na(+)(out). It carries out the reaction L-serine(in) + Na(+)(in) = L-serine(out) + Na(+)(out). The enzyme catalyses L-cysteine(in) + Na(+)(in) = L-cysteine(out) + Na(+)(out). The catalysed reaction is L-methionine(in) + Na(+)(in) = L-methionine(out) + Na(+)(out). It catalyses the reaction glycine(in) + Na(+)(in) = glycine(out) + Na(+)(out). It carries out the reaction L-threonine(in) + Na(+)(in) = L-threonine(out) + Na(+)(out). The enzyme catalyses L-proline(in) + Na(+)(in) = L-proline(out) + Na(+)(out). With respect to regulation, inhibited by alpha-(methylamino)isobutyric acid (MeAIB). Inhibited by lithium, potassium, choline ions, N-methylglucamine. The pH dependence has an allosteric effect on the transport. Its function is as follows. Symporter that cotransports short-chain neutral amino acids and sodium ions from the extraccellular to the intracellular side of the cell membrane. The transport is elctrogenic, pH dependent and driven by the Na(+) electrochemical gradient. Participates in the astroglia-derived glutamine transport into GABAergic interneurons for neurotransmitter GABA de novo synthesis. May also contributes to amino acid transport in placental trophoblast. Regulates synaptic plasticity. The protein is Sodium-coupled neutral amino acid symporter 1 of Mus musculus (Mouse).